A 350-amino-acid chain; its full sequence is N-acetyl-gamma-glutamyl-phosphate reductase (350 aa).

Residue cysteine 153 is part of the active site.

The protein belongs to the NAGSA dehydrogenase family. Type 1 subfamily.

It is found in the cytoplasm. The catalysed reaction is N-acetyl-L-glutamate 5-semialdehyde + phosphate + NADP(+) = N-acetyl-L-glutamyl 5-phosphate + NADPH + H(+). It functions in the pathway amino-acid biosynthesis; L-arginine biosynthesis; N(2)-acetyl-L-ornithine from L-glutamate: step 3/4. Functionally, catalyzes the NADPH-dependent reduction of N-acetyl-5-glutamyl phosphate to yield N-acetyl-L-glutamate 5-semialdehyde. The polypeptide is N-acetyl-gamma-glutamyl-phosphate reductase (Gloeobacter violaceus (strain ATCC 29082 / PCC 7421)).